Here is a 970-residue protein sequence, read N- to C-terminus: Serine/threonine-protein kinase PLK4 (970 aa).

Positions 12–265 constitute a Protein kinase domain; that stretch reads FKVGNLLGKG…LSSVLDHPFM (254 aa). Residues 18 to 26 and Lys-41 each bind ATP; that span reads LGKGSFAGV. Residues Lys-45 and Lys-46 each carry the N6-acetyllysine modification. Asp-136 (proton acceptor) is an active-site residue. Disordered regions lie at residues 323-458 and 497-538; these read TVFP…NHLC and SISP…HSVK. Over residues 328 to 356 the composition is skewed to polar residues; the sequence is NKSSTDFSSSGDGNSFYTQWGNQETSNSG. Basic and acidic residues predominate over residues 360–369; the sequence is VIQDAEERPH. Over residues 379 to 393 the composition is skewed to polar residues; sequence SDRSGTSNSQSQAKT. Ser-401 carries the phosphoserine modification. Positions 438–454 are enriched in polar residues; it reads SSSSGSFERPDNNQALS. Residues 504-515 are compositionally biased toward basic and acidic residues; the sequence is FQGHPDLQKDTS. One can recognise a Cryptic POLO box 1 (CPB1) domain in the interval 586-699; sequence TLRSITSPLV…SRFVQLVRSK (114 aa). Ser-665 carries the post-translational modification Phosphoserine. Positions 700–813 constitute a Cryptic POLO box 2 (CPB2) domain; the sequence is SPKITYFTRY…GRKPGSTSSP (114 aa). The interval 808–828 is disordered; the sequence is GSTSSPKALSPPPSVDSNYPT. Ser-817 bears the Phosphoserine mark. In terms of domain architecture, POLO box spans 886–964; sequence QLLKSVFVKN…LSSILLMFSN (79 aa).

Belongs to the protein kinase superfamily. Ser/Thr protein kinase family. CDC5/Polo subfamily. Homodimer. Interacts with CEP152 (via N-terminus). Interacts with CEP78; this interaction may be important for proper PLK4 localization to the centriole and PLK4-induced overduplication of centrioles. Interacts with CEP131. Interacts simultaneously with TENT5C and CEP192. Interacts with TENT5C; this interaction leads to the TENT5C recruitment in the centrosome. Interacts with CEP85; this interaction may be important in cell migration and centriole assembly. Post-translationally, acetylation by KAT2A and KAT2B impairs kinase activity by shifting the kinase to an inactive conformation. Ubiquitinated; leading to its degradation by the proteasome. Deubiquitinated by USP54; leading to PLK4 stabilization. In terms of processing, tyrosine-phosphorylated by TEC.

It is found in the cytoplasm. The protein localises to the cytoskeleton. The protein resides in the microtubule organizing center. Its subcellular location is the centrosome. It localises to the centriole. It is found in the nucleus. The protein localises to the nucleolus. The protein resides in the cleavage furrow. It carries out the reaction L-seryl-[protein] + ATP = O-phospho-L-seryl-[protein] + ADP + H(+). The enzyme catalyses L-threonyl-[protein] + ATP = O-phospho-L-threonyl-[protein] + ADP + H(+). In terms of biological role, serine/threonine-protein kinase that plays a central role in centriole duplication. Able to trigger procentriole formation on the surface of the parental centriole cylinder, leading to the recruitment of centriole biogenesis proteins such as SASS6, CPAP, CCP110, CEP135 and gamma-tubulin. When overexpressed, it is able to induce centrosome amplification through the simultaneous generation of multiple procentrioles adjoining each parental centriole during S phase. Phosphorylates 'Ser-151' of FBXW5 during the G1/S transition, leading to inhibit FBXW5 ability to ubiquitinate SASS6. Its central role in centriole replication suggests a possible role in tumorigenesis, centrosome aberrations being frequently observed in tumors. Also involved in deuterosome-mediated centriole amplification in multiciliated that can generate more than 100 centrioles. Also involved in trophoblast differentiation by phosphorylating HAND1, leading to disrupt the interaction between HAND1 and MDFIC and activate HAND1. Phosphorylates CDC25C and CHEK2. Required for the recruitment of STIL to the centriole and for STIL-mediated centriole amplification. Phosphorylates CEP131 at 'Ser-78' and PCM1 at 'Ser-372' which is essential for proper organization and integrity of centriolar satellites. The protein is Serine/threonine-protein kinase PLK4 of Homo sapiens (Human).